Reading from the N-terminus, the 311-residue chain is tRNA-cytidine(32) 2-sulfurtransferase (311 aa).

Residues 47–52 (SGGKDS) carry the PP-loop motif motif. Positions 122, 125, and 213 each coordinate [4Fe-4S] cluster.

This sequence belongs to the TtcA family. As to quaternary structure, homodimer. Mg(2+) serves as cofactor. It depends on [4Fe-4S] cluster as a cofactor.

It localises to the cytoplasm. The enzyme catalyses cytidine(32) in tRNA + S-sulfanyl-L-cysteinyl-[cysteine desulfurase] + AH2 + ATP = 2-thiocytidine(32) in tRNA + L-cysteinyl-[cysteine desulfurase] + A + AMP + diphosphate + H(+). It participates in tRNA modification. Catalyzes the ATP-dependent 2-thiolation of cytidine in position 32 of tRNA, to form 2-thiocytidine (s(2)C32). The sulfur atoms are provided by the cysteine/cysteine desulfurase (IscS) system. The sequence is that of tRNA-cytidine(32) 2-sulfurtransferase from Escherichia fergusonii (strain ATCC 35469 / DSM 13698 / CCUG 18766 / IAM 14443 / JCM 21226 / LMG 7866 / NBRC 102419 / NCTC 12128 / CDC 0568-73).